Reading from the N-terminus, the 238-residue chain is Ribonuclease PH (238 aa).

Phosphate contacts are provided by residues Arg86 and 124–126 (GTR).

The protein belongs to the RNase PH family. As to quaternary structure, homohexameric ring arranged as a trimer of dimers.

The catalysed reaction is tRNA(n+1) + phosphate = tRNA(n) + a ribonucleoside 5'-diphosphate. Phosphorolytic 3'-5' exoribonuclease that plays an important role in tRNA 3'-end maturation. Removes nucleotide residues following the 3'-CCA terminus of tRNAs; can also add nucleotides to the ends of RNA molecules by using nucleoside diphosphates as substrates, but this may not be physiologically important. Probably plays a role in initiation of 16S rRNA degradation (leading to ribosome degradation) during starvation. The protein is Ribonuclease PH of Maricaulis maris (strain MCS10) (Caulobacter maris).